Reading from the N-terminus, the 201-residue chain is Superoxide dismutase [Fe] (201 aa).

Fe cation-binding residues include His27, His79, Asp161, and His165.

The protein belongs to the iron/manganese superoxide dismutase family. As to quaternary structure, homodimer. Requires Fe cation as cofactor.

The enzyme catalyses 2 superoxide + 2 H(+) = H2O2 + O2. Functionally, destroys superoxide anion radicals which are normally produced within the cells and which are toxic to biological systems. The sequence is that of Superoxide dismutase [Fe] (sodB) from Synechococcus elongatus (strain ATCC 33912 / PCC 7942 / FACHB-805) (Anacystis nidulans R2).